Here is a 305-residue protein sequence, read N- to C-terminus: Ribonuclease BN (305 aa).

Residues H64, H66, D68, H69, H141, D212, and H270 each contribute to the Zn(2+) site. The Proton acceptor role is filled by D68.

It belongs to the RNase Z family. RNase BN subfamily. Homodimer. Zn(2+) is required as a cofactor.

Zinc phosphodiesterase, which has both exoribonuclease and endoribonuclease activities. This Shigella boydii serotype 18 (strain CDC 3083-94 / BS512) protein is Ribonuclease BN.